The sequence spans 572 residues: Proline--tRNA ligase (572 aa).

The protein belongs to the class-II aminoacyl-tRNA synthetase family. ProS type 1 subfamily. In terms of assembly, homodimer.

It is found in the cytoplasm. It carries out the reaction tRNA(Pro) + L-proline + ATP = L-prolyl-tRNA(Pro) + AMP + diphosphate. In terms of biological role, catalyzes the attachment of proline to tRNA(Pro) in a two-step reaction: proline is first activated by ATP to form Pro-AMP and then transferred to the acceptor end of tRNA(Pro). As ProRS can inadvertently accommodate and process non-cognate amino acids such as alanine and cysteine, to avoid such errors it has two additional distinct editing activities against alanine. One activity is designated as 'pretransfer' editing and involves the tRNA(Pro)-independent hydrolysis of activated Ala-AMP. The other activity is designated 'posttransfer' editing and involves deacylation of mischarged Ala-tRNA(Pro). The misacylated Cys-tRNA(Pro) is not edited by ProRS. The polypeptide is Proline--tRNA ligase (Escherichia coli O139:H28 (strain E24377A / ETEC)).